A 156-amino-acid chain; its full sequence is Putative HTH-type transcriptional regulator YffB (156 aa).

Residues 2–137 form the HTH rrf2-type domain; sequence KLSSGWEQSV…SNVSLAQVAD (136 aa).

In Lactococcus lactis subsp. lactis (strain IL1403) (Streptococcus lactis), this protein is Putative HTH-type transcriptional regulator YffB (yffB).